The chain runs to 627 residues: tRNA uridine 5-carboxymethylaminomethyl modification enzyme MnmG (627 aa).

FAD contacts are provided by residues 13 to 18 (GGGHAG), V125, and S180. 274-288 (GPRYCPSIEDKVVRF) provides a ligand contact to NAD(+). Q371 provides a ligand contact to FAD.

Belongs to the MnmG family. As to quaternary structure, homodimer. Heterotetramer of two MnmE and two MnmG subunits. Requires FAD as cofactor.

It localises to the cytoplasm. NAD-binding protein involved in the addition of a carboxymethylaminomethyl (cmnm) group at the wobble position (U34) of certain tRNAs, forming tRNA-cmnm(5)s(2)U34. The sequence is that of tRNA uridine 5-carboxymethylaminomethyl modification enzyme MnmG from Francisella tularensis subsp. tularensis (strain WY96-3418).